We begin with the raw amino-acid sequence, 356 residues long: MDLYPLVRPFLPLFTPEQAHGLSIRALKKGLVPADRSPADPVLRTRVWNIDFPNPVGLAAGFDKDAEIIDPLLSLGFGFVEAGSVTPRPQPGNPKPRLFRLDEDEGVINRFGFNSQGLAPFIYQLGKRKAAGLPGIVGANVGKNKETEDASEDYVAGVSATCRLADYIVCNVSSPNTPGLRLLQARTEMSALIGAALSARNDSLPDAATRPPLLVKVAPDLDDAGLEAVAEVTLELGVDGIIMGNTTISRPDSLRSRHKGETGGLSGAPLFTLSTERLGALYRLVRGRIPLVGAGGIASGADAYAKIRAGASLVQLYSALVFHGPALVPRIKADLAARLKADGFRSVADAVGADIR.

FMN-binding positions include 60-64 (AGFDK) and Ser84. Position 64 (Lys64) interacts with substrate. 109–113 (NRFGF) provides a ligand contact to substrate. FMN is bound by residues Asn140 and Asn171. Substrate is bound at residue Asn171. Ser174 acts as the Nucleophile in catalysis. Asn176 serves as a coordination point for substrate. 2 residues coordinate FMN: Lys216 and Gly244. Substrate is bound at residue 245 to 246 (NT). FMN-binding positions include Gly267, Gly296, and 317-318 (YS).

It belongs to the dihydroorotate dehydrogenase family. Type 2 subfamily. Monomer. Requires FMN as cofactor.

Its subcellular location is the cell membrane. It carries out the reaction (S)-dihydroorotate + a quinone = orotate + a quinol. It functions in the pathway pyrimidine metabolism; UMP biosynthesis via de novo pathway; orotate from (S)-dihydroorotate (quinone route): step 1/1. Functionally, catalyzes the conversion of dihydroorotate to orotate with quinone as electron acceptor. The chain is Dihydroorotate dehydrogenase (quinone) from Azorhizobium caulinodans (strain ATCC 43989 / DSM 5975 / JCM 20966 / LMG 6465 / NBRC 14845 / NCIMB 13405 / ORS 571).